Consider the following 484-residue polypeptide: Protein LAZ1 homolog 1 (484 aa).

An N-terminal signal peptide occupies residues methionine 1 to serine 19. 6 helical membrane passes run proline 42 to phenylalanine 62, phenylalanine 76 to valine 96, methionine 190 to glycine 210, glycine 219 to valine 239, isoleucine 264 to valine 284, and tyrosine 299 to alanine 319. A disordered region spans residues proline 344 to aspartate 364. A compositionally biased stretch (basic and acidic residues) spans glutamate 347–aspartate 364. A coiled-coil region spans residues isoleucine 406–lysine 428. The tract at residues valine 459–arginine 484 is disordered.

The protein belongs to the TMEM184 family.

The protein resides in the membrane. In Arabidopsis thaliana (Mouse-ear cress), this protein is Protein LAZ1 homolog 1.